The following is a 141-amino-acid chain: Hemoglobin subunit alpha-D (141 aa).

The region spanning Met1–Arg141 is the Globin domain. Heme b contacts are provided by His58 and His87.

Belongs to the globin family. Heterotetramer of two alpha-D chains and two beta chains. Red blood cells.

Functionally, involved in oxygen transport from the lung to the various peripheral tissues. The chain is Hemoglobin subunit alpha-D (HBAD) from Anser indicus (Bar-headed goose).